The following is a 255-amino-acid chain: MSSNKASFFTRLRRLCRLAVWLFKTGKNLRGIDGGCPESRNRAVIELGRGVLAALDIGLEVGRPAPEHPNGVLVAANHVSWLDIFAMSAVYPSSFIAKQEIKSWPVLGKMGQNAGTVFINRNSRRDIEPINRAVCETLQRGQNVSFFPEARTSSGLGLLPFKAALFQSAIDAGAKVLAVALRYYDETGKRTARPSYADVGLPTCLWRIVSMKKLTIRVDFVCVADAAESEDRYALKDKIEESIRAVVADDADIAV.

Positions 78 to 83 (HVSWLD) match the HXXXXD motif motif.

The protein belongs to the 1-acyl-sn-glycerol-3-phosphate acyltransferase family.

Its subcellular location is the cell inner membrane. The enzyme catalyses a 1-acyl-sn-glycero-3-phosphate + an acyl-CoA = a 1,2-diacyl-sn-glycero-3-phosphate + CoA. Its pathway is phospholipid metabolism; CDP-diacylglycerol biosynthesis; CDP-diacylglycerol from sn-glycerol 3-phosphate: step 2/3. In terms of biological role, converts lysophosphatidic acid (LPA) into phosphatidic acid by incorporating acyl moiety at the 2 position. This chain is 1-acyl-sn-glycerol-3-phosphate acyltransferase (plsC), found in Neisseria meningitidis serogroup B (strain ATCC BAA-335 / MC58).